The following is a 420-amino-acid chain: Annetocin receptor (420 aa).

The Extracellular portion of the chain corresponds to 1-54 (MEMDDDEAILLDDIYALASTPNQTIVTSSFPQTVSPGFLARRNEALAMVEVAVQ). A glycan (N-linked (GlcNAc...) asparagine) is linked at Asn22. The chain crosses the membrane as a helical span at residues 55-75 (STILILTVVGNAAVLAMIVSL). The Cytoplasmic portion of the chain corresponds to 76-83 (SRHKDLGR). A helical membrane pass occupies residues 84-104 (MYTMIGHLSCADLFVAIFNLL). Residues 105-124 (PQLLWDVTHRFRGGRVLCKL) are Extracellular-facing. Cys122 and Cys201 form a disulfide bridge. A helical membrane pass occupies residues 125–145 (VKYVQVVAMYASAYVLMSTAV). Over 146–166 (DRYTAICHPMRSHTWTSTTAH) the chain is Cytoplasmic. The helical transmembrane segment at 167-187 (YLVIGAWVLALVFAVPQLVIF) threads the bilayer. The Extracellular portion of the chain corresponds to 188–212 (DYVEVVPGSGVYDCVDHFRPRWTLP). Residues 213 to 233 (VYITWFALAVYVIPLVVLATI) form a helical membrane-spanning segment. The Cytoplasmic segment spans residues 234–328 (YLRICVVVWK…KTKTVKLTLT (95 aa)). Residues 329–349 (VVISYLVCWAPFFVSHIWSAW) traverse the membrane as a helical segment. Residues 350–360 (DPHAPFEGTEM) lie on the Extracellular side of the membrane. The chain crosses the membrane as a helical span at residues 361–381 (VITLLLGSLNSCINPWIYLAF). The Cytoplasmic portion of the chain corresponds to 382–420 (SDQLRRKVTQCCPRSWGQRPSTLSHDSTDFRSGSRPTHS). Residues 397–420 (WGQRPSTLSHDSTDFRSGSRPTHS) are disordered. A compositionally biased stretch (polar residues) spans 399-420 (QRPSTLSHDSTDFRSGSRPTHS).

It belongs to the G-protein coupled receptor 1 family. Vasopressin/oxytocin receptor subfamily. Nephridia in clitellum region.

It localises to the cell membrane. Its function is as follows. Receptor for annetocin. Activation by annetocin may induce egg-laying behavior through calcium-dependent signaling. This is Annetocin receptor from Eisenia fetida (Red wiggler worm).